The following is a 415-amino-acid chain: ATP-dependent Clp protease ATP-binding subunit ClpX (415 aa).

Residues 1–54 (MARNRMGGALICSFCNKPESSERFVVPGPGGIAICDRCVDLCESYIKSYKTVRP) enclose the ClpX-type ZB domain. Positions 12, 15, 35, and 38 each coordinate Zn(2+). 117 to 124 (PTGSGKTL) contributes to the ATP binding site.

This sequence belongs to the ClpX chaperone family. Component of the ClpX-ClpP complex. Forms a hexameric ring that, in the presence of ATP, binds to fourteen ClpP subunits assembled into a disk-like structure with a central cavity, resembling the structure of eukaryotic proteasomes.

Its function is as follows. ATP-dependent specificity component of the Clp protease. It directs the protease to specific substrates. Can perform chaperone functions in the absence of ClpP. The polypeptide is ATP-dependent Clp protease ATP-binding subunit ClpX (Treponema denticola (strain ATCC 35405 / DSM 14222 / CIP 103919 / JCM 8153 / KCTC 15104)).